Reading from the N-terminus, the 109-residue chain is Fluoride-specific ion channel FluC 1 (109 aa).

The next 3 helical transmembrane spans lie at 21–41, 52–72, and 84–104; these read LFIN…GFFI, IILS…YFLY, and IIFC…GFWI.

The protein belongs to the fluoride channel Fluc/FEX (TC 1.A.43) family.

Its subcellular location is the cell inner membrane. The enzyme catalyses fluoride(in) = fluoride(out). Functionally, fluoride-specific ion channel. Important for reducing fluoride concentration in the cell, thus reducing its toxicity. This chain is Fluoride-specific ion channel FluC 1, found in Prochlorococcus marinus (strain MIT 9312).